The following is a 460-amino-acid chain: tRNA (guanine(37)-N(1))-methyltransferase (460 aa).

S-adenosyl-L-methionine contacts are provided by residues histidine 204, 243–244 (DL), 271–272 (DA), and asparagine 292. Low complexity predominate over residues 390–428 (ASTTTTPTTSNTNTSTTTSTTSTSTTTTESTNTNNSANN). The tract at residues 390 to 460 (ASTTTTPTTS…SIDTNKKLKN (71 aa)) is disordered. Positions 442–451 (DSNETNETDS) are enriched in acidic residues.

The protein belongs to the class I-like SAM-binding methyltransferase superfamily. TRM5/TYW2 family. Monomer.

The protein localises to the mitochondrion matrix. Its subcellular location is the nucleus. It is found in the cytoplasm. It catalyses the reaction guanosine(37) in tRNA + S-adenosyl-L-methionine = N(1)-methylguanosine(37) in tRNA + S-adenosyl-L-homocysteine + H(+). Its function is as follows. Specifically methylates the N1 position of guanosine-37 in various cytoplasmic and mitochondrial tRNAs. Methylation is not dependent on the nature of the nucleoside 5' of the target nucleoside. This is the first step in the biosynthesis of wybutosine (yW), a modified base adjacent to the anticodon of tRNAs and required for accurate decoding. The polypeptide is tRNA (guanine(37)-N(1))-methyltransferase (trmt5) (Dictyostelium discoideum (Social amoeba)).